A 289-amino-acid chain; its full sequence is 4-diphosphocytidyl-2-C-methyl-D-erythritol kinase (289 aa).

The active site involves Lys-10. 94 to 104 (PVAAGLAGGSS) is an ATP binding site. The active site involves Asp-136.

Belongs to the GHMP kinase family. IspE subfamily.

It carries out the reaction 4-CDP-2-C-methyl-D-erythritol + ATP = 4-CDP-2-C-methyl-D-erythritol 2-phosphate + ADP + H(+). It functions in the pathway isoprenoid biosynthesis; isopentenyl diphosphate biosynthesis via DXP pathway; isopentenyl diphosphate from 1-deoxy-D-xylulose 5-phosphate: step 3/6. Catalyzes the phosphorylation of the position 2 hydroxy group of 4-diphosphocytidyl-2C-methyl-D-erythritol. In Bacillus licheniformis (strain ATCC 14580 / DSM 13 / JCM 2505 / CCUG 7422 / NBRC 12200 / NCIMB 9375 / NCTC 10341 / NRRL NRS-1264 / Gibson 46), this protein is 4-diphosphocytidyl-2-C-methyl-D-erythritol kinase.